Consider the following 151-residue polypeptide: ALK and LTK ligand 2 (151 aa).

The N-terminal stretch at 1 to 25 (MRVSGRPMLLALLLLLSTVGDPGHA) is a signal peptide. Disulfide bonds link Cys-112–Cys-148 and Cys-126–Cys-135.

The protein belongs to the ALKAL family. Homodimer.

The protein resides in the secreted. The protein localises to the cell membrane. Functionally, cytokine that acts as a physiological ligand for receptor tyrosine kinases LTK and ALK, leading to their activation. Cytokine-binding is sufficient to activate LTK. In contrast, ALKAL2-driven activation of ALK is coupled with heparin-binding to ALK. Stimulation of ALK signaling is involved in neural development and regulation of energy expenditure. The protein is ALK and LTK ligand 2 of Rattus norvegicus (Rat).